The chain runs to 607 residues: Tyrosine-protein kinase RYK (607 aa).

The segment at 1–20 (MRGAARLGRPGRSCLPGARG) is disordered. An N-terminal signal peptide occupies residues 1 to 25 (MRGAARLGRPGRSCLPGARGLRAPP). The Extracellular segment spans residues 26–227 (PPPLLLLLAL…VHAAPTTSTR (202 aa)). The region spanning 66–194 (LYLSEDEVRR…VLNFKRRKMC (129 aa)) is the WIF domain. N-linked (GlcNAc...) asparagine glycosylation is found at N139, N174, N178, N182, and N209. C159 and C194 form a disulfide bridge. The helical transmembrane segment at 228-248 (VFYISVGVCCAVIFLVAIILA) threads the bilayer. Residues 249 to 607 (VLHLHSMKRI…EFHAALGAYV (359 aa)) are Cytoplasmic-facing. Residues 266-282 (ASSSSQGLSQPSTQTTQ) show a composition bias toward low complexity. Positions 266–290 (ASSSSQGLSQPSTQTTQYLRADTPN) are disordered. The Protein kinase domain maps to 330 to 603 (ITLKDVLQEG…QCLTEFHAAL (274 aa)). ATP contacts are provided by residues 336–344 (LQEGTFGRI) and K364. The Proton acceptor role is filled by D465. Y495 is subject to Phosphotyrosine; by autocatalysis.

It belongs to the protein kinase superfamily. Tyr protein kinase family. In terms of assembly, interacts with DVL1 (via PDZ domain). Proteolytically cleaved, in part by presenilin, in response to WNT3 stimulation. Cleavage occurs during neuronal differentiation. Observed in all the tissues examined.

The protein localises to the membrane. The protein resides in the nucleus. It localises to the cytoplasm. The enzyme catalyses L-tyrosyl-[protein] + ATP = O-phospho-L-tyrosyl-[protein] + ADP + H(+). In terms of biological role, may be a coreceptor along with FZD8 of Wnt proteins, such as WNT1, WNT3, WNT3A and WNT5A. Involved in neuron differentiation, axon guidance, corpus callosum establishment and neurite outgrowth. In response to WNT3 stimulation, receptor C-terminal cleavage occurs in its transmembrane region and allows the C-terminal intracellular product to translocate from the cytoplasm to the nucleus where it plays a crucial role in neuronal development. The protein is Tyrosine-protein kinase RYK of Homo sapiens (Human).